The chain runs to 306 residues: 17-beta-hydroxysteroid dehydrogenase type 3 (306 aa).

G44–L73 serves as a coordination point for NADP(+). S181 contributes to the substrate binding site. Catalysis depends on Y194, which acts as the Proton acceptor.

Belongs to the short-chain dehydrogenases/reductases (SDR) family. 17-beta-HSD 3 subfamily.

The protein resides in the endoplasmic reticulum. The enzyme catalyses a 17beta-hydroxy steroid + NADP(+) = a 17-oxo steroid + NADPH + H(+). The catalysed reaction is testosterone + NADP(+) = androst-4-ene-3,17-dione + NADPH + H(+). It carries out the reaction 17beta-estradiol + NADP(+) = estrone + NADPH + H(+). It catalyses the reaction 3beta-hydroxyandrost-5-en-17-one + NADPH + H(+) = androst-5-en-3beta,17beta-diol + NADP(+). The enzyme catalyses 17beta-hydroxy-5alpha-androstan-3-one + NADP(+) = 5alpha-androstan-3,17-dione + NADPH + H(+). The catalysed reaction is androsterone + NADPH + H(+) = 5alpha-androstane-3alpha,17beta-diol + NADP(+). It carries out the reaction 3beta-hydroxy-5alpha-androstan-17-one + NADPH + H(+) = 5alpha-androstane-3beta,17beta-diol + NADP(+). It catalyses the reaction androst-4-ene-3,11,17-trione + NADPH + H(+) = 17beta-hydroxyandrost-4-ene-3,11-dione + NADP(+). The enzyme catalyses 11beta-hydroxyandrost-4-ene-3,17-dione + NADPH + H(+) = 11beta,17beta-dihydroxyandrost-4-ene-3-one + NADP(+). It participates in hormone biosynthesis; testosterone biosynthesis. It functions in the pathway steroid metabolism. In terms of biological role, catalyzes the conversion of 17-oxosteroids to 17beta-hydroxysteroids. Favors the reduction of androstenedione to testosterone. Testosterone is the key androgen driving male development and function. Uses NADPH while the two other EDH17B enzymes use NADH. Androgens such as epiandrosterone, dehydroepiandrosterone, androsterone and androstanedione are accepted as substrates and reduced at C-17. Can reduce 11-ketoandrostenedione as well as 11beta-hydroxyandrostenedione at C-17 to the respective testosterone forms. Plays a role in the rate-limiting-step for the maximum level of testosterone production by the testis but does not affect basal testosterone production. In Rattus norvegicus (Rat), this protein is 17-beta-hydroxysteroid dehydrogenase type 3.